Reading from the N-terminus, the 406-residue chain is Zinc finger CCCH domain-containing protein 15 homolog (406 aa).

Residues 1–11 (MPPKKAPAGPS) show a composition bias toward low complexity. The segment at 1-70 (MPPKKAPAGP…DKKKDEKEKK (70 aa)) is disordered. The segment covering 12 to 28 (KKTEQKKKEKVIEDKTF) has biased composition (basic and acidic residues). Low complexity predominate over residues 38–50 (QQKFIQQVQKQVQ). The segment covering 56 to 70 (PRQDGDKKKDEKEKK) has biased composition (basic and acidic residues). Positions 57–82 (RQDGDKKKDEKEKKLADLREMASIFK) form a coiled coil. 2 consecutive C3H1-type zinc fingers follow at residues 94-121 (DPKS…HDLS) and 166-203 (PTTE…HALP). The interval 336–382 (VDGSGTIASSTRLLDQATEAAKTAAAEDGAASDDENPSSSAPANDAA) is disordered. Composition is skewed to low complexity over residues 352–364 (ATEA…AEDG) and 372–382 (PSSSAPANDAA).

This sequence belongs to the ZC3H15/TMA46 family.

The polypeptide is Zinc finger CCCH domain-containing protein 15 homolog (Drosophila pseudoobscura pseudoobscura (Fruit fly)).